The primary structure comprises 266 residues: Putative carbamate hydrolase RutD (266 aa).

It belongs to the AB hydrolase superfamily. Hydrolase RutD family.

It catalyses the reaction carbamate + 2 H(+) = NH4(+) + CO2. In terms of biological role, involved in pyrimidine catabolism. May facilitate the hydrolysis of carbamate, a reaction that can also occur spontaneously. This Escherichia coli O139:H28 (strain E24377A / ETEC) protein is Putative carbamate hydrolase RutD.